The sequence spans 417 residues: Transmembrane protease serine 11D (417 aa).

Over 1-17 (MYRPRSMVSPSRFFNPF) the chain is Cytoplasmic. A helical; Signal-anchor for type II membrane protein transmembrane segment spans residues 18–38 (MVALIVIITVGLLAMTAGLLI). Residues 39 to 417 (HFLAFDKRAY…RNWIRQQTGI (379 aa)) lie on the Extracellular side of the membrane. Residues 46–162 (RAYFYHSNFH…SNGITSLTDQ (117 aa)) form the SEA domain. Intrachain disulfides connect cysteine 172-cysteine 291, cysteine 211-cysteine 227, cysteine 336-cysteine 352, and cysteine 363-cysteine 392. One can recognise a Peptidase S1 domain in the interval 186–416 (IIGGTQAETG…YRNWIRQQTG (231 aa)). Catalysis depends on charge relay system residues histidine 226 and aspartate 271. Residue serine 367 is the Charge relay system of the active site.

This sequence belongs to the peptidase S1 family. As to quaternary structure, monomer. As to expression, isoform 1 and isoform 2 are expressed in the esophagus, tongue and trachea. Isoform 2 is also highly expressed in the adrenal cortex and heart.

It localises to the cell membrane. The protein localises to the secreted. In terms of biological role, may play some biological role in the host defense system on the mucous membrane independently of or in cooperation with other substances in airway mucous or bronchial secretions. Plays a role in the proteolytic processing of ACE2. Preferentially cleaves the C-terminal side of arginine residues at the P1 position of certain peptides. Isoform 2 may play a key role in regulating adrenal proliferation by specifically cleaving N-POMC. This chain is Transmembrane protease serine 11D (Tmprss11d), found in Rattus norvegicus (Rat).